Reading from the N-terminus, the 78-residue chain is Small ribosomal subunit protein uS17 (78 aa).

This sequence belongs to the universal ribosomal protein uS17 family. As to quaternary structure, part of the 30S ribosomal subunit.

Functionally, one of the primary rRNA binding proteins, it binds specifically to the 5'-end of 16S ribosomal RNA. This chain is Small ribosomal subunit protein uS17, found in Parvibaculum lavamentivorans (strain DS-1 / DSM 13023 / NCIMB 13966).